A 177-amino-acid chain; its full sequence is Large ribosomal subunit protein uL6 (177 aa).

It belongs to the universal ribosomal protein uL6 family. Part of the 50S ribosomal subunit.

Its function is as follows. This protein binds to the 23S rRNA, and is important in its secondary structure. It is located near the subunit interface in the base of the L7/L12 stalk, and near the tRNA binding site of the peptidyltransferase center. The protein is Large ribosomal subunit protein uL6 of Pectobacterium carotovorum subsp. carotovorum (strain PC1).